Reading from the N-terminus, the 657-residue chain is UvrABC system protein B (657 aa).

One can recognise a Helicase ATP-binding domain in the interval K25–R182. Position 38–45 (G38–T45) interacts with ATP. The short motif at Y91–I114 is the Beta-hairpin element. The Helicase C-terminal domain occupies Q429–I595. The UVR domain maps to K621 to K656.

The protein belongs to the UvrB family. As to quaternary structure, forms a heterotetramer with UvrA during the search for lesions. Interacts with UvrC in an incision complex.

It localises to the cytoplasm. Its function is as follows. The UvrABC repair system catalyzes the recognition and processing of DNA lesions. A damage recognition complex composed of 2 UvrA and 2 UvrB subunits scans DNA for abnormalities. Upon binding of the UvrA(2)B(2) complex to a putative damaged site, the DNA wraps around one UvrB monomer. DNA wrap is dependent on ATP binding by UvrB and probably causes local melting of the DNA helix, facilitating insertion of UvrB beta-hairpin between the DNA strands. Then UvrB probes one DNA strand for the presence of a lesion. If a lesion is found the UvrA subunits dissociate and the UvrB-DNA preincision complex is formed. This complex is subsequently bound by UvrC and the second UvrB is released. If no lesion is found, the DNA wraps around the other UvrB subunit that will check the other stand for damage. The polypeptide is UvrABC system protein B (Clostridium botulinum (strain Eklund 17B / Type B)).